The chain runs to 281 residues: 2-dehydro-3-deoxyphosphooctonate aldolase (281 aa).

This sequence belongs to the KdsA family.

The protein resides in the cytoplasm. It catalyses the reaction D-arabinose 5-phosphate + phosphoenolpyruvate + H2O = 3-deoxy-alpha-D-manno-2-octulosonate-8-phosphate + phosphate. The protein operates within carbohydrate biosynthesis; 3-deoxy-D-manno-octulosonate biosynthesis; 3-deoxy-D-manno-octulosonate from D-ribulose 5-phosphate: step 2/3. It participates in bacterial outer membrane biogenesis; lipopolysaccharide biosynthesis. In Hahella chejuensis (strain KCTC 2396), this protein is 2-dehydro-3-deoxyphosphooctonate aldolase.